The chain runs to 302 residues: tRNA-cytidine(32) 2-sulfurtransferase (302 aa).

Positions 43-48 match the PP-loop motif motif; it reads SGGKDS. [4Fe-4S] cluster contacts are provided by Cys118, Cys121, and Cys209.

The protein belongs to the TtcA family. In terms of assembly, homodimer. Mg(2+) serves as cofactor. Requires [4Fe-4S] cluster as cofactor.

The protein localises to the cytoplasm. It catalyses the reaction cytidine(32) in tRNA + S-sulfanyl-L-cysteinyl-[cysteine desulfurase] + AH2 + ATP = 2-thiocytidine(32) in tRNA + L-cysteinyl-[cysteine desulfurase] + A + AMP + diphosphate + H(+). The protein operates within tRNA modification. Functionally, catalyzes the ATP-dependent 2-thiolation of cytidine in position 32 of tRNA, to form 2-thiocytidine (s(2)C32). The sulfur atoms are provided by the cysteine/cysteine desulfurase (IscS) system. The protein is tRNA-cytidine(32) 2-sulfurtransferase of Polynucleobacter necessarius subsp. necessarius (strain STIR1).